The sequence spans 230 residues: Cytidylate kinase (230 aa).

ATP is bound at residue 11 to 19 (GQSAAGKST).

It belongs to the cytidylate kinase family. Type 1 subfamily.

The protein localises to the cytoplasm. It catalyses the reaction CMP + ATP = CDP + ADP. It carries out the reaction dCMP + ATP = dCDP + ADP. This chain is Cytidylate kinase, found in Chloroflexus aggregans (strain MD-66 / DSM 9485).